An 863-amino-acid chain; its full sequence is Desmocollin-2 (863 aa).

A propeptide spanning residues 1–89 (KFIGRVNLKE…QEKVLRRAKR (89 aa)) is cleaved from the precursor. Cadherin domains are found at residues 90–197 (RWAP…APIF), 198–309 (TETS…LPTF), 310–423 (TRSS…GPEC), 424–528 (DPRV…VIPQ), and 529–644 (RTVV…ILGK). Residues 90-644 (RWAPIPCSVP…TGNREVILGK (555 aa)) lie on the Extracellular side of the membrane. Residue Asn-120 is glycosylated (N-linked (GlcNAc...) asparagine). 3 N-linked (GlcNAc...) asparagine glycosylation sites follow: Asn-346, Asn-495, and Asn-579. A helical membrane pass occupies residues 645 to 665 (WAILAILLGIALLFCILFTLV). Over 666 to 863 (CGATTGADKK…RTLAETCMKR (198 aa)) the chain is Cytoplasmic. Residues Ser-826, Ser-830, and Ser-835 each carry the phosphoserine modification.

As to quaternary structure, interacts with DSP, PKP2 and JUP. Interacts with DSG3; the interaction may limit the interaction of DSC3 with p38MAPK family members and therefore repress p38MAPK signaling activation. Expressed in esophagus and rumen. Weakly expressed in epithelia and cardiac muscle.

It is found in the cell membrane. It localises to the cell junction. The protein resides in the desmosome. Functionally, a component of desmosome cell-cell junctions which are required for positive regulation of cellular adhesion. Promotes timely incorporation of DSG2 into desmosome intercellular junctions and promotes interaction of desmosome cell junctions with intermediate filament cytokeratin, via modulation of DSP phosphorylation. Plays an important role in desmosome-mediated maintenance of intestinal epithelial cell intercellular adhesion strength and barrier function. Positively regulates wound healing of intestinal mucosa via promotion of epithelial cell migration, and also plays a role in mechanotransduction of force between intestinal epithelial cells and extracellular matrix. May contribute to epidermal cell positioning (stratification) by mediating differential adhesiveness between cells that express different isoforms. This Bos taurus (Bovine) protein is Desmocollin-2 (DSC2).